Here is a 208-residue protein sequence, read N- to C-terminus: RNA chaperone ProQ (208 aa).

2 stretches are compositionally biased toward basic and acidic residues: residues 99–115 and 126–135; these read AQETLKESKAKVAEKNK and PAKDKPENTA. The disordered stretch occupies residues 99–149; it reads AQETLKESKAKVAEKNKATNKAAAKKAPAKDKPENTAKAKPKTAKKPAKPK. Residues 137 to 149 are compositionally biased toward basic residues; it reads AKPKTAKKPAKPK.

Belongs to the ProQ family.

Its subcellular location is the cytoplasm. In terms of biological role, RNA chaperone with significant RNA binding, RNA strand exchange and RNA duplexing activities. This is RNA chaperone ProQ from Idiomarina loihiensis (strain ATCC BAA-735 / DSM 15497 / L2-TR).